The primary structure comprises 526 residues: Chaperonin GroEL, chloroplastic (526 aa).

Residues 29-32 (TLGP), 86-90 (DGTTT), glycine 412, 476-478 (DAA), and aspartate 492 contribute to the ATP site.

The protein belongs to the chaperonin (HSP60) family. As to quaternary structure, forms a cylinder of 14 subunits composed of two heptameric rings stacked back-to-back. Interacts with the co-chaperonin GroES.

Its subcellular location is the plastid. It localises to the chloroplast. It carries out the reaction ATP + H2O + a folded polypeptide = ADP + phosphate + an unfolded polypeptide.. In terms of biological role, together with its co-chaperonin GroES, plays an essential role in assisting protein folding. The GroEL-GroES system forms a nano-cage that allows encapsulation of the non-native substrate proteins and provides a physical environment optimized to promote and accelerate protein folding. The protein is Chaperonin GroEL, chloroplastic of Cyanidioschyzon merolae (strain NIES-3377 / 10D) (Unicellular red alga).